A 421-amino-acid chain; its full sequence is ATP-dependent RNA helicase RhlB (421 aa).

The Q motif signature appears at 9 to 37 (QKFSDFALHPAVIEALEKKGFHNCTPIQA). One can recognise a Helicase ATP-binding domain in the interval 40 to 219 (LPLTLEGRDV…FEQMNNAEYV (180 aa)). 53-60 (AQTGTGKT) contacts ATP. Residues 165-168 (DEAD) carry the DEAD box motif. The region spanning 245–390 (RLLQTLLEEE…VSKYNPDALM (146 aa)) is the Helicase C-terminal domain. The segment at 396–421 (PLRLTRARPGNGPRRNGPPRNRRRSG) is disordered. Over residues 403–414 (RPGNGPRRNGPP) the composition is skewed to low complexity.

The protein belongs to the DEAD box helicase family. RhlB subfamily. Component of the RNA degradosome, which is a multiprotein complex involved in RNA processing and mRNA degradation.

It localises to the cytoplasm. The catalysed reaction is ATP + H2O = ADP + phosphate + H(+). Its function is as follows. DEAD-box RNA helicase involved in RNA degradation. Has RNA-dependent ATPase activity and unwinds double-stranded RNA. In Klebsiella pneumoniae subsp. pneumoniae (strain ATCC 700721 / MGH 78578), this protein is ATP-dependent RNA helicase RhlB.